We begin with the raw amino-acid sequence, 645 residues long: Fructose-1,6-bisphosphatase class 3 (645 aa).

This sequence belongs to the FBPase class 3 family. It depends on Mn(2+) as a cofactor.

The enzyme catalyses beta-D-fructose 1,6-bisphosphate + H2O = beta-D-fructose 6-phosphate + phosphate. It functions in the pathway carbohydrate biosynthesis; gluconeogenesis. This is Fructose-1,6-bisphosphatase class 3 from Fusobacterium nucleatum subsp. nucleatum (strain ATCC 25586 / DSM 15643 / BCRC 10681 / CIP 101130 / JCM 8532 / KCTC 2640 / LMG 13131 / VPI 4355).